The primary structure comprises 129 residues: Small ribosomal subunit protein uS9 (129 aa).

The segment at 108–129 (RMVERKKYGKKKARKSFQFSKR) is disordered. A compositionally biased stretch (basic residues) spans 114–129 (KYGKKKARKSFQFSKR).

This sequence belongs to the universal ribosomal protein uS9 family.

In Chlorobaculum tepidum (strain ATCC 49652 / DSM 12025 / NBRC 103806 / TLS) (Chlorobium tepidum), this protein is Small ribosomal subunit protein uS9.